A 96-amino-acid polypeptide reads, in one-letter code: Small ribosomal subunit protein bS16 (96 aa).

Belongs to the bacterial ribosomal protein bS16 family.

The protein is Small ribosomal subunit protein bS16 of Anaplasma phagocytophilum (strain HZ).